An 879-amino-acid polypeptide reads, in one-letter code: MKEEAFLRRRFSLCPPSSTPQKVDPRKLTRNLLLSGDNELYPLSPGKDMEPNGPSLPRDEGPPTPSSATKVPPAEYRLCNGSDKECVSPTARVTKKETLKAQKENYRQEKKRATRQLLSALTDPSVVIMADSLKIRGTLKSWTKLWCVLKPGVLLIYKTPKVGQWVGTVLLHCCELIERPSKKDGFCFKLFHPLDQSVWAVKGPKGESVGSITQPLPSSYLIFRAASESDGRCWLDALELALRCSSLLRLGTCKPGRDGEPGTSPDASPSSLCGLPASATVHPDQDLFPLNGSSLENDAFSDKSERENPEESDTETQDHSRKTESGSDQSETPGAPVRRGTTYVEQVQEELGELGEASQVETVSEENKSLMWTLLKQLRPGMDLSRVVLPTFVLEPRSFLNKLSDYYYHADLLSRAAVEEDAYSRMKLVLRWYLSGFYKKPKGIKKPYNPILGETFRCCWFHPQTDSRTFYIAEQVSHHPPVSAFHVSNRKDGFCISGSITAKSRFYGNSLSALLDGKATLTFLNRAEDYTLTMPYAHCKGILYGTMTLELGGKVTIECAKNNFQAQLEFKLKPFFGGSTSINQISGKITSGEEVLASLSGHWDRDVFIKEEGSGSSALFWTPSGEVRRQRLRQHTVPLEEQTELESERLWQHVTRAISKGDQHRATQEKFALEEAQRQRARERQESLMPWKPQLFHLDPITQEWHYRYEDHSPWDPLKDIAQFEQDGILRTLQQEAVARQTTFLGSPGPRHERSGPDQRLRKASDQPSGHSQATESSGSTPESCPELSDEEQDGDFVPGGESPCPRCRKEARRLQALHEAILSIREAQQELHRHLSAMLSSTARAAQAPTPGLLQSPRSWFLLCVFLACQLFINHILK.

The interval 1–73 (MKEEAFLRRR…TPSSATKVPP (73 aa)) is disordered. Ser12 is subject to Phosphoserine. Residues 93–123 (VTKKETLKAQKENYRQEKKRATRQLLSALTD) are a coiled coil. Residues 126–243 (VVIMADSLKI…WLDALELALR (118 aa)) enclose the PH domain. A disordered region spans residues 254–341 (KPGRDGEPGT…TPGAPVRRGT (88 aa)). 2 stretches are compositionally biased toward basic and acidic residues: residues 300 to 309 (FSDKSERENP) and 316 to 325 (TQDHSRKTES). Residues 384 to 389 (LSRVVL), 446 to 449 (KPYN), and 478 to 479 (HH) each bind a 1,2-diacyl-sn-glycero-3-phospho-(1D-myo-inositol 4-phosphate). Residues 384–389 (LSRVVL) and Asn449 each bind a 1,2-diacyl-sn-glycero-3-phospho-L-serine. Ser504 is an a 1,2-diacyl-sn-glycero-3-phospho-L-serine binding site. Residues Lys670, Glu674, and Arg678 each contribute to the a 1,2-diacyl-sn-glycero-3-phospho-(1D-myo-inositol 4-phosphate) site. A disordered region spans residues 742 to 806 (TTFLGSPGPR…FVPGGESPCP (65 aa)). Ser747 bears the Phosphoserine mark. Positions 750–765 (PRHERSGPDQRLRKAS) are enriched in basic and acidic residues. The span at 766–783 (DQPSGHSQATESSGSTPE) shows a compositional bias: polar residues. Residues 860-878 (SWFLLCVFLACQLFINHIL) traverse the membrane as a helical segment.

Belongs to the OSBP family. In terms of tissue distribution, ubiquitously expressed.

The protein resides in the endoplasmic reticulum membrane. Its function is as follows. Lipid transporter involved in lipid countertransport between the endoplasmic reticulum and the plasma membrane: specifically exchanges phosphatidylserine with phosphatidylinositol 4-phosphate (PI4P), delivering phosphatidylserine to the plasma membrane in exchange for PI4P, which is degraded by the SAC1/SACM1L phosphatase in the endoplasmic reticulum. Binds phosphatidylserine and PI4P in a mutually exclusive manner. May cooperate with NPC1 to mediate the exit of cholesterol from endosomes/lysosomes. Binds 25-hydroxycholesterol and cholesterol. This is Oxysterol-binding protein-related protein 5 (OSBPL5) from Homo sapiens (Human).